Here is a 214-residue protein sequence, read N- to C-terminus: Adenylate kinase (214 aa).

10 to 15 (GGGKGT) contributes to the ATP binding site. The interval 30–59 (STGDMFRENVKGGTELGLKAKEYMDAGQLV) is NMP. AMP is bound by residues Thr-31, Arg-36, 57-59 (QLV), 85-88 (GFPR), and Gln-92. The LID stretch occupies residues 126 to 163 (GRRVCRVCGATFHVLFNAPKEDGKCDKCGGELYQRSDD). Arg-127 contacts ATP. Zn(2+)-binding residues include Cys-130 and Cys-133. 136 to 137 (TF) contacts ATP. Residues Cys-150 and Cys-153 each coordinate Zn(2+). Residues Arg-160 and Arg-171 each contribute to the AMP site. Residue Gln-199 coordinates ATP.

Belongs to the adenylate kinase family. As to quaternary structure, monomer.

It localises to the cytoplasm. It carries out the reaction AMP + ATP = 2 ADP. Its pathway is purine metabolism; AMP biosynthesis via salvage pathway; AMP from ADP: step 1/1. Catalyzes the reversible transfer of the terminal phosphate group between ATP and AMP. Plays an important role in cellular energy homeostasis and in adenine nucleotide metabolism. This Desulforudis audaxviator (strain MP104C) protein is Adenylate kinase.